We begin with the raw amino-acid sequence, 463 residues long: Exodeoxyribonuclease 7 large subunit (463 aa).

It belongs to the XseA family. As to quaternary structure, heterooligomer composed of large and small subunits.

It localises to the cytoplasm. It catalyses the reaction Exonucleolytic cleavage in either 5'- to 3'- or 3'- to 5'-direction to yield nucleoside 5'-phosphates.. Functionally, bidirectionally degrades single-stranded DNA into large acid-insoluble oligonucleotides, which are then degraded further into small acid-soluble oligonucleotides. The protein is Exodeoxyribonuclease 7 large subunit of Klebsiella pneumoniae (strain 342).